Consider the following 154-residue polypeptide: Ribonuclease HI (154 aa).

The RNase H type-1 domain maps to 1 to 142; it reads MPKQIEIFTD…CDELAKKGAE (142 aa). The Mg(2+) site is built by Asp10, Glu48, Asp70, and Asp134.

The protein belongs to the RNase H family. Monomer. Requires Mg(2+) as cofactor.

Its subcellular location is the cytoplasm. The enzyme catalyses Endonucleolytic cleavage to 5'-phosphomonoester.. Its function is as follows. Endonuclease that specifically degrades the RNA of RNA-DNA hybrids. This Haemophilus influenzae (strain ATCC 51907 / DSM 11121 / KW20 / Rd) protein is Ribonuclease HI (rnhA).